Consider the following 367-residue polypeptide: AA9 family lytic polysaccharide monooxygenase A (367 aa).

Positions 1-20 (MKSSTFGMLALAAAAKLVSA) are cleaved as a signal peptide. Position 21 (His-21) interacts with Cu(2+). Positions 37-56 (GNSESGYIRSPPSNSPITDV) are disordered. A disulfide bond links Cys-63 and Cys-183. Cu(2+) is bound at residue His-102. Position 169 (His-169) interacts with O2. Tyr-180 is a binding site for Cu(2+). Residues 234-287 (GASGSSSSPSASASASAPAATSAAPAPSSFTTIAKQPATSSTEAPSTENTSTTS) form a disordered region. Low complexity-rich tracts occupy residues 235–262 (ASGSSSSPSASASASAPAATSAAPAPSS) and 270–287 (PATSSTEAPSTENTSTTS). Residue Asn-282 is glycosylated (N-linked (GlcNAc...) asparagine). The CBM1 domain maps to 329–365 (GAVKEWYQCGGLNYKGSTQCEEGLTCKKWNPYYYQCI).

Belongs to the polysaccharide monooxygenase AA9 family. Cu(2+) serves as cofactor.

Its subcellular location is the secreted. The catalysed reaction is [(1-&gt;4)-beta-D-glucosyl]n+m + reduced acceptor + O2 = 4-dehydro-beta-D-glucosyl-[(1-&gt;4)-beta-D-glucosyl]n-1 + [(1-&gt;4)-beta-D-glucosyl]m + acceptor + H2O.. In terms of biological role, lytic polysaccharide monooxygenase (LPMO) that depolymerizes crystalline and amorphous polysaccharides via the oxidation of scissile alpha- or beta-(1-4)-glycosidic bonds, yielding C4 oxidation products. Catalysis by LPMOs requires the reduction of the active-site copper from Cu(II) to Cu(I) by a reducing agent and H(2)O(2) or O(2) as a cosubstrate. Active on cellulose and cello-oligosaccharides, as well as plant cell wall-derived hemicellulosic polysaccharides. Also active on cello-oligosaccharides such as cellohexaose, cellopentaose or cellotetraose. This is AA9 family lytic polysaccharide monooxygenase A from Aspergillus oryzae (strain ATCC 42149 / RIB 40) (Yellow koji mold).